Here is a 685-residue protein sequence, read N- to C-terminus: Bifunctional lycopene cyclase/phytoene synthase (685 aa).

The interval 15 to 255 (TLSYRHFHLL…LVSACFTFDR (241 aa)) is lycopene beta-cyclase. Helical transmembrane passes span 21 to 41 (FHLL…RPFL), 48 to 68 (KLIL…NLIV), 92 to 114 (YFFF…RWAL), 129 to 149 (LATP…KAAV), 156 to 176 (YFGM…WGSV), 187 to 207 (GLAP…ASDV), and 231 to 251 (LPIE…SACF). The interval 262-685 (QSVAENAPPL…RAVSAVYFGV (424 aa)) is phytoene synthase.

In the N-terminal section; belongs to the lycopene beta-cyclase family. The protein in the C-terminal section; belongs to the phytoene/squalene synthase family.

The protein resides in the membrane. It catalyses the reaction all-trans-lycopene = gamma-carotene. The enzyme catalyses gamma-carotene = all-trans-beta-carotene. It carries out the reaction 2 (2E,6E,10E)-geranylgeranyl diphosphate = 15-cis-phytoene + 2 diphosphate. Its pathway is carotenoid biosynthesis; beta-carotene biosynthesis. The protein operates within carotenoid biosynthesis; phytoene biosynthesis; all-trans-phytoene from geranylgeranyl diphosphate: step 1/1. Its function is as follows. Bifunctional enzyme that catalyzes the reactions from geranylgeranyl diphosphate to phytoene (phytoene synthase) and lycopene to beta-carotene via the intermediate gamma-carotene (lycopene cyclase). This Sporisorium reilianum (strain SRZ2) (Maize head smut fungus) protein is Bifunctional lycopene cyclase/phytoene synthase.